A 227-amino-acid chain; its full sequence is UPF0173 metal-dependent hydrolase BC_4613 (227 aa).

Belongs to the UPF0173 family.

The protein is UPF0173 metal-dependent hydrolase BC_4613 of Bacillus cereus (strain ATCC 14579 / DSM 31 / CCUG 7414 / JCM 2152 / NBRC 15305 / NCIMB 9373 / NCTC 2599 / NRRL B-3711).